We begin with the raw amino-acid sequence, 44 residues long: Thymosin beta-12 (44 aa).

Basic and acidic residues-rich tracts occupy residues 1 to 25 (MSDK…ETQE) and 33 to 44 (ETIEQEKAAATS). A disordered region spans residues 1 to 44 (MSDKPDISEVTSFDKTKLKKTETQEKNPLPSKETIEQEKAAATS). Ser2 bears the N-acetylserine mark.

It belongs to the thymosin beta family.

The protein resides in the cytoplasm. Its subcellular location is the cytoskeleton. Functionally, plays an important role in the organization of the cytoskeleton. Binds to and sequesters actin monomers (G actin) and therefore inhibits actin polymerization. The polypeptide is Thymosin beta-12 (Lateolabrax japonicus (Japanese sea perch)).